Reading from the N-terminus, the 365-residue chain is Centrosomal protein of 41 kDa B (365 aa).

A compositionally biased stretch (basic and acidic residues) spans 1–14 (MSAKRSIGDPEILK). Disordered regions lie at residues 1–23 (MSAK…NQKY) and 104–123 (EFLT…SKSP). A Rhodanese domain is found at 177 to 274 (EDCPFLLLDV…ISQKFPQGLT (98 aa)). Positions 329–365 (TSTPSRLRLDSRNSKVPSSASSARSLSSTSSHSKPWK) are disordered. Over residues 342–365 (SKVPSSASSARSLSSTSSHSKPWK) the composition is skewed to low complexity.

This sequence belongs to the CEP41 family.

It is found in the cytoplasm. It localises to the cytoskeleton. The protein resides in the microtubule organizing center. The protein localises to the centrosome. Its subcellular location is the cell projection. It is found in the cilium. It localises to the cilium basal body. Its function is as follows. Required during ciliogenesis for tubulin glutamylation in cilium. Probably acts by participating in the transport of tubulin polyglutamylases between the basal body and the cilium. In Xenopus laevis (African clawed frog), this protein is Centrosomal protein of 41 kDa B (cep41-b).